Here is a 570-residue protein sequence, read N- to C-terminus: Proline--tRNA ligase (570 aa).

Belongs to the class-II aminoacyl-tRNA synthetase family. ProS type 1 subfamily. Homodimer.

Its subcellular location is the cytoplasm. The catalysed reaction is tRNA(Pro) + L-proline + ATP = L-prolyl-tRNA(Pro) + AMP + diphosphate. In terms of biological role, catalyzes the attachment of proline to tRNA(Pro) in a two-step reaction: proline is first activated by ATP to form Pro-AMP and then transferred to the acceptor end of tRNA(Pro). As ProRS can inadvertently accommodate and process non-cognate amino acids such as alanine and cysteine, to avoid such errors it has two additional distinct editing activities against alanine. One activity is designated as 'pretransfer' editing and involves the tRNA(Pro)-independent hydrolysis of activated Ala-AMP. The other activity is designated 'posttransfer' editing and involves deacylation of mischarged Ala-tRNA(Pro). The misacylated Cys-tRNA(Pro) is not edited by ProRS. The polypeptide is Proline--tRNA ligase (Clostridium acetobutylicum (strain ATCC 824 / DSM 792 / JCM 1419 / IAM 19013 / LMG 5710 / NBRC 13948 / NRRL B-527 / VKM B-1787 / 2291 / W)).